Here is a 151-residue protein sequence, read N- to C-terminus: UPF0756 membrane protein lhv_0995 (151 aa).

The next 5 helical transmembrane spans lie at 4-24 (WLFLALVLVVALVGKNMSLII), 25-45 (ATGVVMALKLIPFASKWLPVI), 52-72 (WGVTVISVAILIPVATGQIGF), 78-98 (TFKSPAGWIAILAGIAVAILS), and 115-135 (LVLGTIIGVVVFKGVAAGPVI).

Belongs to the UPF0756 family.

Its subcellular location is the cell membrane. The protein is UPF0756 membrane protein lhv_0995 of Lactobacillus helveticus (strain DPC 4571).